The sequence spans 861 residues: ToMV resistant protein Tm-2 netted virescent (861 aa).

Positions 63 to 83 (VKNLLKDIQELAGDVEDLLDD) form a coiled coil. Residues 162 to 388 (DDFNMLQAKL…LESMGHKVQD (227 aa)) form the NB-ARC domain. 185-192 (GMPGLGKT) serves as a coordination point for ATP. LRR repeat units lie at residues 225-248 (LDIA…NLRS), 305-327 (LHAL…IFNF), 388-411 (DGCA…CFLY), 449-472 (LAED…TYNG), 510-536 (VARL…KLEK), 585-608 (MTCL…IVKL), 609-631 (TRLE…VWES), 652-680 (ISSF…FFEP), 689-710 (LRKL…IFSP), 712-735 (LKAL…LSSY), 736-758 (PHIA…SFPP), 784-807 (LRKL…EANG), and 810-835 (FPQL…DVSM).

The protein belongs to the disease resistance NB-LRR family. In terms of assembly, (Microbial infection) Interacts with tobamoviruses mouvement protein at the plasma membrane; this interaction triggers defense responses leading to programmed cell death. Binds to HSP90 proteins; this interaction seems required for defense responses toward tobamoviruses.

The protein resides in the cell membrane. Its function is as follows. Inhibitor of viral mouvements which confers resistance to some tobamoviruses including tomato mosaic virus (ToMV) (e.g. isolate L and W3) and tobacco mosaic virus (TMV), but not to resistance-breaking isolates (e.g. Ltbl) ToMV and tomato brown rugose fruit virus (ToBRFV). Elicits a hypersensitive reaction in response to avirulent (Avr) movement proteins from resistance inducing tobamoviruses (e.g. ToMV and TMV) strains, thus leading to programmed cell death. This Solanum lycopersicum (Tomato) protein is ToMV resistant protein Tm-2 netted virescent.